A 414-amino-acid polypeptide reads, in one-letter code: Wilms tumor protein homolog A (414 aa).

Glycyl lysine isopeptide (Lys-Gly) (interchain with G-Cter in SUMO) cross-links involve residues Lys-55 and Lys-158. The 9aaTAD motif lies at 217-225 (MTWNQMNLG). C2H2-type zinc fingers lie at residues 288 to 312 (FMCAYPGCNKRYFKLSHLQMHSRKH), 318 to 342 (YQCDFKDCERRFSRSDQLKRHQRRH), and 348 to 370 (FQCKTCQRKFSRSDHLKTHTRTH). Important for interaction with target DNA stretches follow at residues 332–346 (SDQLKRHQRRHTGIK) and 358–366 (SRSDHLKTH). The short motif at 373 to 375 (KTS) is the KTS motif element. The segment at 379–403 (FSCRWPSCQKKFARSDELVRHHNMH) adopts a C2H2-type 4 zinc-finger fold.

Belongs to the EGR C2H2-type zinc-finger protein family. As to expression, expressed around the pronephric anlage and in the pronephros; expression is restricted to the splanchnic mesoderm (the site where the glomus forms) from tailbud stages, and the glomus of early tadpoles. Not expressed in the pronephric tubules or pronephric duct. In tadpoles (stage 38-39), additional expression begins in the heart. Also expressed in the adult kidney (mesonephros).

The protein localises to the nucleus. Its subcellular location is the cytoplasm. It localises to the nucleus speckle. In terms of biological role, transcription factor required for development of the vascular component of the pronephric kidney, the glomus; may repress tubule-specific gene expression in the portion of the pronephros fated to form the glomus. Recognizes and binds to the DNA sequence 5'-GCG(T/G)GGGCG-3'. Inhibits Wnt-signaling during embryonic development. Function may be isoform-specific: the isoform containing the KTS motif is less effective in inhibiting wnt signaling. This Xenopus laevis (African clawed frog) protein is Wilms tumor protein homolog A (wt1-a).